Consider the following 1142-residue polypeptide: Zinc finger MYM-type protein 1 (1142 aa).

K25 is covalently cross-linked (Glycyl lysine isopeptide (Lys-Gly) (interchain with G-Cter in SUMO2)). 3 consecutive MYM-type zinc fingers follow at residues 110–148, 160–203, and 210–245; these read QLFC…PKDV, KTFC…QYEV, and HNLC…SSSL. Residue K284 forms a Glycyl lysine isopeptide (Lys-Gly) (interchain with G-Cter in SUMO2) linkage. The segment at 300 to 331 adopts an MYM-type 4 zinc-finger fold; it reads ELFCSINCFSAYSKAKMESSSVSVVSVVHDTS. Residues 385-396 are compositionally biased toward polar residues; sequence KSSPSEPSNAVA. The segment at 385–413 is disordered; it reads KSSPSEPSNAVASSSTEQPSVSPSSSVFS. Positions 397 to 413 are enriched in low complexity; that stretch reads SSSTEQPSVSPSSSVFS. The TTF-type zinc finger occupies 452–538; it reads KSRSIKKSCC…YQFCDGAVSD (87 aa).

It is found in the nucleus. This is Zinc finger MYM-type protein 1 (ZMYM1) from Homo sapiens (Human).